Consider the following 89-residue polypeptide: MATKKAGGSSKNGRDSAGRRLGLKKTDGQLVNAGNIIVKQRGTKFYPGKNVGLGKDHTIFSLVSGKVKFFRKKKNRVFISVVVDDSTAA.

The segment at 1-26 (MATKKAGGSSKNGRDSAGRRLGLKKT) is disordered.

It belongs to the bacterial ribosomal protein bL27 family.

The chain is Large ribosomal subunit protein bL27 from Orientia tsutsugamushi (strain Boryong) (Rickettsia tsutsugamushi).